A 169-amino-acid chain; its full sequence is S-ribosylhomocysteine lyase (169 aa).

His54, His58, and Cys128 together coordinate Fe cation.

The protein belongs to the LuxS family. Homodimer. It depends on Fe cation as a cofactor.

It carries out the reaction S-(5-deoxy-D-ribos-5-yl)-L-homocysteine = (S)-4,5-dihydroxypentane-2,3-dione + L-homocysteine. Its function is as follows. Involved in the synthesis of autoinducer 2 (AI-2) which is secreted by bacteria and is used to communicate both the cell density and the metabolic potential of the environment. The regulation of gene expression in response to changes in cell density is called quorum sensing. Catalyzes the transformation of S-ribosylhomocysteine (RHC) to homocysteine (HC) and 4,5-dihydroxy-2,3-pentadione (DPD). The sequence is that of S-ribosylhomocysteine lyase from Psychromonas ingrahamii (strain DSM 17664 / CCUG 51855 / 37).